A 93-amino-acid polypeptide reads, in one-letter code: UPF0358 protein RBAM_014700 (93 aa).

This sequence belongs to the UPF0358 family.

The protein is UPF0358 protein RBAM_014700 of Bacillus velezensis (strain DSM 23117 / BGSC 10A6 / LMG 26770 / FZB42) (Bacillus amyloliquefaciens subsp. plantarum).